Here is a 253-residue protein sequence, read N- to C-terminus: Porin thermoregulatory protein EnvY (253 aa).

The region spanning 149–246 (DSVCRIIQSD…GLTPLNYLAK (98 aa)) is the HTH araC/xylS-type domain. 2 DNA-binding regions (H-T-H motif) span residues 166-187 (RIVASSLCLSPSLLKKKLKNEN) and 213-236 (ITQVAQLCGYSSTSYFISVFKAFY).

Influences the temperature-dependent expression of several E.coli envelope proteins, most notably the porins OmpF and OmpC and the lambda receptor, LamB. This chain is Porin thermoregulatory protein EnvY (envY), found in Escherichia coli (strain K12).